Consider the following 635-residue polypeptide: MNSQDLKKRQEKIRNFSIIAHIDHGKSTLADRILEKTETVSSREMQAQLLDSMDLERERGITIKLNAIELNYTAKDGETYIFHLIDTPGHVDFTYEVSRSLAACEGAILVVDAAQGIEAQTLANVYLALDNDLEILPVINKIDLPAADPERVRHEVEDVIGLDASEAVLASAKAGIGIEEILEQIVEKVPAPTGDVDAPLQALIFDSVYDAYRGVILQVRIVNGIVKPGDKIQMMSNGKTFDVTEVGIFTPKAVGRDFLATGDVGYVAASIKTVADTRVGDTVTLANNPAKEALHGYKQMNPMVFAGIYPIESNKYNDLREALEKLQLNDASLQFEPETSQALGFGFRCGFLGLLHMDVIQERLEREFNIDLIMTAPSVVYHVHTTDEDMIEVSNPSEFPDPTRVAFIEEPYVKAQIMVPQEFVGAVMELSQRKRGDFVTMDYIDDNRVNVIYQIPLAEIVFDFFDKLKSSTRGYASFDYDMSEYRRSQLVKMDILLNGDKVDALSFIVHKEFAYERGKIIVEKLKKIIPRQQFEVPIQAAIGQKIVARSDIKALRKNVLAKCYGGDVSRKRKLLEKQKAGKKRMKAIGSVEVPQEAFLSVLSMDDRCQEITKPNRLVFRGELLWAYMTKKLIIS.

The tr-type G domain occupies 11–193; the sequence is EKIRNFSIIA…QIVEKVPAPT (183 aa). GTP is bound by residues 23 to 28 and 140 to 143; these read DHGKST and NKID.

This sequence belongs to the TRAFAC class translation factor GTPase superfamily. Classic translation factor GTPase family. LepA subfamily.

Its subcellular location is the cell membrane. The catalysed reaction is GTP + H2O = GDP + phosphate + H(+). Its function is as follows. Required for accurate and efficient protein synthesis under certain stress conditions. May act as a fidelity factor of the translation reaction, by catalyzing a one-codon backward translocation of tRNAs on improperly translocated ribosomes. Back-translocation proceeds from a post-translocation (POST) complex to a pre-translocation (PRE) complex, thus giving elongation factor G a second chance to translocate the tRNAs correctly. Binds to ribosomes in a GTP-dependent manner. In Streptococcus pyogenes serotype M12 (strain MGAS2096), this protein is Elongation factor 4.